The chain runs to 124 residues: Histone H2B, embryonic (124 aa).

Residues 1-31 (MAPTAQVAKKGSKKAVKGTKTAXGGKKRNRK) form a disordered region. Ser-111 carries O-linked (GlcNAc) serine glycosylation. Residue Lys-119 forms a Glycyl lysine isopeptide (Lys-Gly) (interchain with G-Cter in ubiquitin) linkage.

The protein belongs to the histone H2B family. In terms of assembly, the nucleosome is a histone octamer containing two molecules each of H2A, H2B, H3 and H4 assembled in one H3-H4 heterotetramer and two H2A-H2B heterodimers. The octamer wraps approximately 147 bp of DNA. Post-translationally, monoubiquitination of Lys-119 gives a specific tag for epigenetic transcriptional activation and is also prerequisite for histone H3 'Lys-4' and 'Lys-79' methylation. In terms of processing, glcNAcylation at Ser-111 promotes monoubiquitination of Lys-119. It fluctuates in response to extracellular glucose, and associates with transcribed genes.

The protein resides in the nucleus. Its subcellular location is the chromosome. In terms of biological role, core component of nucleosome. Nucleosomes wrap and compact DNA into chromatin, limiting DNA accessibility to the cellular machineries which require DNA as a template. Histones thereby play a central role in transcription regulation, DNA repair, DNA replication and chromosomal stability. DNA accessibility is regulated via a complex set of post-translational modifications of histones, also called histone code, and nucleosome remodeling. The chain is Histone H2B, embryonic from Strongylocentrotus purpuratus (Purple sea urchin).